A 110-amino-acid chain; its full sequence is Ribonuclease P protein component 4 (110 aa).

4 residues coordinate Zn(2+): Cys65, Cys68, Cys94, and Cys97.

The protein belongs to the eukaryotic/archaeal RNase P protein component 4 family. Consists of a catalytic RNA component and at least 4-5 protein subunits. Zn(2+) serves as cofactor.

The protein resides in the cytoplasm. The enzyme catalyses Endonucleolytic cleavage of RNA, removing 5'-extranucleotides from tRNA precursor.. Its function is as follows. Part of ribonuclease P, a protein complex that generates mature tRNA molecules by cleaving their 5'-ends. In Methanococcus maripaludis (strain C6 / ATCC BAA-1332), this protein is Ribonuclease P protein component 4.